A 745-amino-acid polypeptide reads, in one-letter code: Phosphoribosylformylglycinamidine synthase subunit PurL (745 aa).

The active site involves H54. ATP contacts are provided by Y57 and K96. E98 contributes to the Mg(2+) binding site. Residues 99–102 and R121 contribute to the substrate site; that span reads SHNH. H100 serves as the catalytic Proton acceptor. D122 lines the Mg(2+) pocket. Residue Q250 participates in substrate binding. Residue D278 participates in Mg(2+) binding. 322–324 provides a ligand contact to substrate; that stretch reads ESQ. Residues D503 and G540 each contribute to the ATP site. N541 is a binding site for Mg(2+). Position 543 (S543) interacts with substrate.

This sequence belongs to the FGAMS family. Monomer. Part of the FGAM synthase complex composed of 1 PurL, 1 PurQ and 2 PurS subunits.

The protein resides in the cytoplasm. It carries out the reaction N(2)-formyl-N(1)-(5-phospho-beta-D-ribosyl)glycinamide + L-glutamine + ATP + H2O = 2-formamido-N(1)-(5-O-phospho-beta-D-ribosyl)acetamidine + L-glutamate + ADP + phosphate + H(+). Its pathway is purine metabolism; IMP biosynthesis via de novo pathway; 5-amino-1-(5-phospho-D-ribosyl)imidazole from N(2)-formyl-N(1)-(5-phospho-D-ribosyl)glycinamide: step 1/2. Part of the phosphoribosylformylglycinamidine synthase complex involved in the purines biosynthetic pathway. Catalyzes the ATP-dependent conversion of formylglycinamide ribonucleotide (FGAR) and glutamine to yield formylglycinamidine ribonucleotide (FGAM) and glutamate. The FGAM synthase complex is composed of three subunits. PurQ produces an ammonia molecule by converting glutamine to glutamate. PurL transfers the ammonia molecule to FGAR to form FGAM in an ATP-dependent manner. PurS interacts with PurQ and PurL and is thought to assist in the transfer of the ammonia molecule from PurQ to PurL. In Helicobacter hepaticus (strain ATCC 51449 / 3B1), this protein is Phosphoribosylformylglycinamidine synthase subunit PurL.